The chain runs to 80 residues: Large ribosomal subunit protein bL31 (80 aa).

Zn(2+) contacts are provided by C16, C18, C38, and C41.

The protein belongs to the bacterial ribosomal protein bL31 family. Type A subfamily. In terms of assembly, part of the 50S ribosomal subunit. It depends on Zn(2+) as a cofactor.

Binds the 23S rRNA. In Mycobacterium avium (strain 104), this protein is Large ribosomal subunit protein bL31.